The primary structure comprises 424 residues: Histidine--tRNA ligase (424 aa).

The protein belongs to the class-II aminoacyl-tRNA synthetase family. As to quaternary structure, homodimer.

The protein localises to the cytoplasm. The catalysed reaction is tRNA(His) + L-histidine + ATP = L-histidyl-tRNA(His) + AMP + diphosphate + H(+). In Salmonella agona (strain SL483), this protein is Histidine--tRNA ligase.